The primary structure comprises 142 residues: Transcription antitermination protein NusB (142 aa).

It belongs to the NusB family.

Its function is as follows. Involved in transcription antitermination. Required for transcription of ribosomal RNA (rRNA) genes. Binds specifically to the boxA antiterminator sequence of the ribosomal RNA (rrn) operons. This chain is Transcription antitermination protein NusB, found in Borrelia garinii subsp. bavariensis (strain ATCC BAA-2496 / DSM 23469 / PBi) (Borreliella bavariensis).